An 892-amino-acid polypeptide reads, in one-letter code: DNA mismatch repair protein MutS (892 aa).

Residue 607 to 614 participates in ATP binding; sequence GPNMSGKS. Residues 833–854 form a disordered region; the sequence is EESQLSFFGGEQSPKKQDKPVL. The span at 845-854 shows a compositional bias: basic and acidic residues; sequence SPKKQDKPVL.

Belongs to the DNA mismatch repair MutS family.

Its function is as follows. This protein is involved in the repair of mismatches in DNA. It is possible that it carries out the mismatch recognition step. This protein has a weak ATPase activity. The sequence is that of DNA mismatch repair protein MutS from Bacillus cereus (strain Q1).